The sequence spans 415 residues: Tyrosine-protein phosphatase non-receptor type 2 (415 aa).

In terms of domain architecture, Tyrosine-protein phosphatase spans 5–275; sequence IEREFEELDT…RFSYMAIIEG (271 aa). The residue at position 22 (Y22) is a Phosphotyrosine. S52 carries the post-translational modification Phosphoserine. Y68 is subject to Phosphotyrosine. Residues D182, 216–222, and Q260 each bind substrate; that span reads CSAGIGR. C216 functions as the Phosphocysteine intermediate in the catalytic mechanism. C216 is subject to S-nitrosocysteine. A phosphoserine mark is found at S293, S298, and S304. Residues 346-415 are endoplasmic reticulum location; that stretch reads ESALRKRIRE…WTLFFQQNAL (70 aa). The interval 376–415 is mediates interaction with STX17; it reads ERKRKRWLYWQPILTKMGFMSVILVGAFVGWTLFFQQNAL.

Belongs to the protein-tyrosine phosphatase family. Non-receptor class 1 subfamily. In terms of assembly, interacts with RMDN3. Isoform 1 interacts with TMED9. Isoform 1 interacts with STX17; dephosphorylates STX17. Interacts with ITGA1 (via cytoplasmic domain); activates the phosphatase activity towards EGFR. Interacts with TRAF2; probably involved in tumor necrosis factor-mediated signaling. Interacts with MET. Interacts with FAM220A and STAT3; interaction with FAM220A promotes interaction of PTPN2 with transcriptional activator STAT3, leading to dephosphorylation of STAT3 by PTPN2 and negative regulation of STAT3 transcriptional activator activity. In terms of processing, specifically phosphorylated in a cell cycle-dependent manner by cyclin-dependent kinases CDK1 and CDK2. Probably activated through phosphorylation by PKR. As to expression, ubiquitously expressed. Isoform 2 is probably the major isoform. Isoform 1 is expressed in T-cells and in placenta.

It localises to the endoplasmic reticulum. Its subcellular location is the endoplasmic reticulum-Golgi intermediate compartment. The protein resides in the nucleus. It is found in the cytoplasm. The protein localises to the cell membrane. It catalyses the reaction O-phospho-L-tyrosyl-[protein] + H2O = L-tyrosyl-[protein] + phosphate. Its function is as follows. Non-receptor type tyrosine-specific phosphatase that dephosphorylates receptor protein tyrosine kinases including INSR, EGFR, CSF1R, PDGFR. Also dephosphorylates non-receptor protein tyrosine kinases like JAK1, JAK2, JAK3, Src family kinases, STAT1, STAT3 and STAT6 either in the nucleus or the cytoplasm. Negatively regulates numerous signaling pathways and biological processes like hematopoiesis, inflammatory response, cell proliferation and differentiation, and glucose homeostasis. Plays a multifaceted and important role in the development of the immune system. Functions in T-cell receptor signaling through dephosphorylation of FYN and LCK to control T-cells differentiation and activation. Dephosphorylates CSF1R, negatively regulating its downstream signaling and macrophage differentiation. Negatively regulates cytokine (IL2/interleukin-2 and interferon)-mediated signaling through dephosphorylation of the cytoplasmic kinases JAK1, JAK3 and their substrate STAT1, that propagate signaling downstream of the cytokine receptors. Also regulates the IL6/interleukin-6 and IL4/interleukin-4 cytokine signaling through dephosphorylation of STAT3 and STAT6 respectively. In addition to the immune system, it is involved in anchorage-dependent, negative regulation of EGF-stimulated cell growth. Activated by the integrin ITGA1/ITGB1, it dephosphorylates EGFR and negatively regulates EGF signaling. Dephosphorylates PDGFRB and negatively regulates platelet-derived growth factor receptor-beta signaling pathway and therefore cell proliferation. Negatively regulates tumor necrosis factor-mediated signaling downstream via MAPK through SRC dephosphorylation. May also regulate the hepatocyte growth factor receptor signaling pathway through dephosphorylation of the hepatocyte growth factor receptor MET. Also plays an important role in glucose homeostasis. For instance, negatively regulates the insulin receptor signaling pathway through the dephosphorylation of INSR and control gluconeogenesis and liver glucose production through negative regulation of the IL6 signaling pathways. May also bind DNA. The polypeptide is Tyrosine-protein phosphatase non-receptor type 2 (PTPN2) (Homo sapiens (Human)).